Reading from the N-terminus, the 428-residue chain is Enolase 2 (428 aa).

Gln162 provides a ligand contact to (2R)-2-phosphoglycerate. The Proton donor role is filled by Glu204. Residues Asp241, Glu285, and Asp312 each coordinate Mg(2+). (2R)-2-phosphoglycerate contacts are provided by Lys337, Arg366, Ser367, and Lys388. Lys337 (proton acceptor) is an active-site residue.

It belongs to the enolase family. It depends on Mg(2+) as a cofactor.

The protein resides in the cytoplasm. The protein localises to the secreted. Its subcellular location is the cell surface. It carries out the reaction (2R)-2-phosphoglycerate = phosphoenolpyruvate + H2O. It participates in carbohydrate degradation; glycolysis; pyruvate from D-glyceraldehyde 3-phosphate: step 4/5. Its function is as follows. Catalyzes the reversible conversion of 2-phosphoglycerate (2-PG) into phosphoenolpyruvate (PEP). It is essential for the degradation of carbohydrates via glycolysis. This Lactobacillus johnsonii (strain CNCM I-12250 / La1 / NCC 533) protein is Enolase 2.